Here is a 428-residue protein sequence, read N- to C-terminus: Adenylosuccinate synthetase (428 aa).

Residues 12–18 (GDEGKGK) and 40–42 (GHT) each bind GTP. Aspartate 13 serves as the catalytic Proton acceptor. Mg(2+) contacts are provided by aspartate 13 and glycine 40. IMP is bound by residues 13–16 (DEGK), 38–41 (NAGH), threonine 128, arginine 142, glutamine 222, threonine 237, and arginine 301. Histidine 41 (proton donor) is an active-site residue. 297–303 (VNTGRAR) contributes to the substrate binding site. Residues arginine 303, 329–331 (KLD), and 411–413 (STS) contribute to the GTP site.

Belongs to the adenylosuccinate synthetase family. In terms of assembly, homodimer. Mg(2+) is required as a cofactor.

Its subcellular location is the cytoplasm. It catalyses the reaction IMP + L-aspartate + GTP = N(6)-(1,2-dicarboxyethyl)-AMP + GDP + phosphate + 2 H(+). Its pathway is purine metabolism; AMP biosynthesis via de novo pathway; AMP from IMP: step 1/2. Functionally, plays an important role in the de novo pathway of purine nucleotide biosynthesis. Catalyzes the first committed step in the biosynthesis of AMP from IMP. This is Adenylosuccinate synthetase from Caulobacter vibrioides (strain ATCC 19089 / CIP 103742 / CB 15) (Caulobacter crescentus).